Here is an 88-residue protein sequence, read N- to C-terminus: Large ribosomal subunit protein eL31 (88 aa).

The protein belongs to the eukaryotic ribosomal protein eL31 family.

The sequence is that of Large ribosomal subunit protein eL31 from Saccharolobus islandicus (strain Y.N.15.51 / Yellowstone #2) (Sulfolobus islandicus).